The sequence spans 433 residues: O-methyltransferase VdtC (433 aa).

Aspartate 284 contacts S-adenosyl-L-methionine. The Proton acceptor role is filled by histidine 335.

Belongs to the class I-like SAM-binding methyltransferase superfamily. Cation-independent O-methyltransferase family. COMT subfamily.

The catalysed reaction is 7,9,10-trihydroxy-3-(2-oxopropyl)-1H-benzo[g]isochromen-1-one + S-adenosyl-L-methionine = 9,10-dihydroxy-7-methoxy-3-(2-oxopropyl)-1H-benzo[g]isochromen-1-one + S-adenosyl-L-homocysteine + H(+). Its pathway is secondary metabolite biosynthesis. In terms of biological role, O-methyltransferase; part of the gene cluster that mediates the biosynthesis of viriditoxin, one of the 'classical' secondary metabolites produced by fungi and that has antibacterial activity. The first step is performed by the polyketide synthase VdtA which condenses one acetyl-CoA and 6 malonyl-CoA units to form the heptaketide monomer backbone of viriditoxin. The product of VdtA is then O-methylated on C7 by the O-methyltransferase VdtC. The O-methyl group is important for the stereoselective coupling of the monomers at the final step of viriditoxin biosynthesis. The short-chain dehydrogenase/reductase VdtF then acts as a stereospecific reductase converting the pyrone to dihydropyrone via the reduction of the C3-C4 double bond. The FAD-binding monooxygenase VdtE then converts the ketone group into a methyl-ester group to yield semi-viriditoxin. Finally, the laccase VdtB is involved in dimerization of 2 semi-viriditoxin molecules to yield the final viriditoxin. VdtB is responsible for the regioselective 6,6'-coupling of semi-viriditoxin, which yields (M)-viriditoxin and (P)-viriditoxin at a ratio of 1:2. The non-catalytic carboxylesterase-like protein VdtD affects the stereochemistical outcome of the coupling. The highly reducing polyketide synthase VdtX is not involved in viriditoxin synthesis, but might possibly play a role in the production of additional metabolites not identified yet. The protein is O-methyltransferase VdtC of Byssochlamys spectabilis (Paecilomyces variotii).